The primary structure comprises 156 residues: Ribosomal RNA large subunit methyltransferase H (156 aa).

Residues L73, G104, and 123 to 128 each bind S-adenosyl-L-methionine; that span reads ISSMTL.

This sequence belongs to the RNA methyltransferase RlmH family. As to quaternary structure, homodimer.

It is found in the cytoplasm. It catalyses the reaction pseudouridine(1915) in 23S rRNA + S-adenosyl-L-methionine = N(3)-methylpseudouridine(1915) in 23S rRNA + S-adenosyl-L-homocysteine + H(+). Functionally, specifically methylates the pseudouridine at position 1915 (m3Psi1915) in 23S rRNA. The polypeptide is Ribosomal RNA large subunit methyltransferase H (Burkholderia ambifaria (strain ATCC BAA-244 / DSM 16087 / CCUG 44356 / LMG 19182 / AMMD) (Burkholderia cepacia (strain AMMD))).